The following is a 347-amino-acid chain: Phenylalanine--tRNA ligase alpha subunit (347 aa).

Glu265 contributes to the Mg(2+) binding site.

It belongs to the class-II aminoacyl-tRNA synthetase family. Phe-tRNA synthetase alpha subunit type 1 subfamily. Tetramer of two alpha and two beta subunits. It depends on Mg(2+) as a cofactor.

It is found in the cytoplasm. It carries out the reaction tRNA(Phe) + L-phenylalanine + ATP = L-phenylalanyl-tRNA(Phe) + AMP + diphosphate + H(+). In Wolbachia sp. subsp. Drosophila simulans (strain wRi), this protein is Phenylalanine--tRNA ligase alpha subunit.